Here is a 542-residue protein sequence, read N- to C-terminus: Chaperonin GroEL 2 (542 aa).

ATP-binding positions include 30 to 33 (TLGP), Lys-51, 87 to 91 (DGTTT), Gly-415, and Asp-496.

The protein belongs to the chaperonin (HSP60) family. In terms of assembly, forms a cylinder of 14 subunits composed of two heptameric rings stacked back-to-back. Interacts with the co-chaperonin GroES.

It localises to the cytoplasm. The catalysed reaction is ATP + H2O + a folded polypeptide = ADP + phosphate + an unfolded polypeptide.. Together with its co-chaperonin GroES, plays an essential role in assisting protein folding. The GroEL-GroES system forms a nano-cage that allows encapsulation of the non-native substrate proteins and provides a physical environment optimized to promote and accelerate protein folding. In Chelativorans sp. (strain BNC1), this protein is Chaperonin GroEL 2.